The following is a 162-amino-acid chain: MAETVADTRRLITKPQNLNDAYGPPSNFLEIDVSNPQTVGVGRGRFTTYEIRVKTNLPIFKLKESTVRRRYSDFEWLRSELERESKVVVPPLPGKAFLRHVPFRGDDGIFDDNFIEERKQGLEQFINKVAGHPLAQNERCLHMFLQDEIIDKSYTPSKIRHA.

At alanine 2 the chain carries N-acetylalanine. The PX domain occupies 27 to 151; that stretch reads NFLEIDVSNP…HMFLQDEIID (125 aa). Position 43 is an omega-N-methylarginine (arginine 43). Arginine 70, serine 72, lysine 95, and arginine 118 together coordinate a 1,2-diacyl-sn-glycero-3-phospho-(1D-myo-inositol-3-phosphate). Serine 72 bears the Phosphoserine mark. Lysine 95 participates in a covalent cross-link: Glycyl lysine isopeptide (Lys-Gly) (interchain with G-Cter in SUMO2). The interval 147 to 162 is binds predominantly to PtdIns(P5) and weaker to PtdIns(P3) abd PtdIns(P4); involved in neurite outgrowth regulation; the sequence is DEIIDKSYTPSKIRHA.

This sequence belongs to the sorting nexin family. In terms of assembly, interacts with VPS26A, VPS29. Interacts with VPS35; the interaction with VPS35 is direct. The association with the retromer CSC subcomplex subunits is proposed to represent a functional distinct retromer variant described as SNX3-retromer complex. Interacts with USP10 and SCNN1A. Interacts with TRFC. Interacts with SNX8; 2 molecules of SNX8 seems to associate with one molecule of SNX3. Interacts with PTPRU. Interacts with MON2 and DOP1B. In terms of processing, ubiquitinated, leading to its proteasomal degradation. Deubiquitinated by USP10. Highly expressed in developing red cells and hematopoietic tissues.

The protein localises to the early endosome. Its subcellular location is the cytoplasmic vesicle. It is found in the phagosome. Functionally, phosphoinositide-binding protein required for multivesicular body formation. Specifically binds phosphatidylinositol 3-phosphate (PtdIns(P3)). Can also bind phosphatidylinositol 4-phosphate (PtdIns(P4)), phosphatidylinositol 5-phosphate (PtdIns(P5)) and phosphatidylinositol 3,5-biphosphate (PtdIns(3,5)P2). Plays a role in protein transport between cellular compartments. Together with RAB7A facilitates endosome membrane association of the retromer cargo-selective subcomplex (CSC). May act in part as component of the SNX3-retromer complex which mediates the retrograde endosome-to-TGN transport of WLS distinct from the SNX-BAR retromer pathway. Promotes stability and cell surface expression of epithelial sodium channel (ENAC) subunits SCNN1A and SCNN1G. Not involved in EGFR degradation. Involved in the regulation of phagocytosis in dendritic cells possibly by regulating EEA1 recruitment to the nascent phagosomes. Involved in iron homeostasis through regulation of endocytic recycling of the transferrin receptor Tfrc presuambly by delivering the transferrin:transferrin receptor complex to recycling endosomes; the function may involve the CSC retromer subcomplex. Involved in regulation of neurite outgrowth in primary neurons. The chain is Sorting nexin-3 (Snx3) from Mus musculus (Mouse).